The sequence spans 131 residues: Large ribosomal subunit protein bL17 (131 aa).

Belongs to the bacterial ribosomal protein bL17 family. In terms of assembly, part of the 50S ribosomal subunit. Contacts protein L32.

The chain is Large ribosomal subunit protein bL17 from Methylobacillus flagellatus (strain ATCC 51484 / DSM 6875 / VKM B-1610 / KT).